The chain runs to 292 residues: Elongation factor Ts (292 aa).

The interval 80 to 83 is involved in Mg(2+) ion dislocation from EF-Tu; that stretch reads TDFV.

The protein belongs to the EF-Ts family.

The protein resides in the cytoplasm. Functionally, associates with the EF-Tu.GDP complex and induces the exchange of GDP to GTP. It remains bound to the aminoacyl-tRNA.EF-Tu.GTP complex up to the GTP hydrolysis stage on the ribosome. The protein is Elongation factor Ts of Psychrobacter sp. (strain PRwf-1).